Reading from the N-terminus, the 431-residue chain is GTPase Obg (431 aa).

Residues 1 to 158 (MFVDQVKISL…IEVTLELKLL (158 aa)) form the Obg domain. The interval 118 to 144 (KGGRGGRGNSRFASPRNPAPDFSENGE) is disordered. One can recognise an OBG-type G domain in the interval 159–330 (ADVGLVGFPS…LLYAIADKLE (172 aa)). Residues 165–172 (GFPSVGKS), 190–194 (FTTIK), 212–215 (DLPG), 282–285 (NKMD), and 311–313 (STF) each bind GTP. S172 and T192 together coordinate Mg(2+). Positions 353 to 431 (KHTPSQDKFT…ILGGEFEFVE (79 aa)) constitute an OCT domain.

It belongs to the TRAFAC class OBG-HflX-like GTPase superfamily. OBG GTPase family. Monomer. Mg(2+) serves as cofactor.

Its subcellular location is the cytoplasm. In terms of biological role, an essential GTPase which binds GTP, GDP and possibly (p)ppGpp with moderate affinity, with high nucleotide exchange rates and a fairly low GTP hydrolysis rate. Plays a role in control of the cell cycle, stress response, ribosome biogenesis and in those bacteria that undergo differentiation, in morphogenesis control. In Staphylococcus saprophyticus subsp. saprophyticus (strain ATCC 15305 / DSM 20229 / NCIMB 8711 / NCTC 7292 / S-41), this protein is GTPase Obg.